A 487-amino-acid chain; its full sequence is UDP-glucosyl transferase 73CC6 (487 aa).

Catalysis depends on histidine 17, which acts as the Proton acceptor. Aspartate 114 functions as the Charge relay in the catalytic mechanism. Residues serine 282, tryptophan 346, alanine 347, histidine 364, asparagine 368, serine 369, glutamate 372, and tyrosine 386 each contribute to the UDP site.

The protein belongs to the UDP-glycosyltransferase family. Mainly expressed in flowers and flower buds and, to a lesser extent, in leaves, stems and roots.

The protein operates within secondary metabolite biosynthesis; terpenoid biosynthesis. Its function is as follows. Component of the oleanane-type triterpene saponins (e.g. saponarioside A and saponarioside B) biosynthetic pathway, leading to the production of natural products with detergent properties used as traditional sources of soap. A glycosyltransferase that mediates the conversion of QA-di to QA-tri via the elongation of the C-3 sugar chain with a D-xylose. The sequence is that of UDP-glucosyl transferase 73CC6 from Saponaria officinalis (Common soapwort).